A 308-amino-acid chain; its full sequence is Cyclin-D4-1 (308 aa).

This sequence belongs to the cyclin family. Cyclin D subfamily. As to quaternary structure, interacts with CDKA-1, CDKB2-1, KRP4/ICK7, KRP5/ICK3, KRP6/ICK4 and KRP7/ICK5. Expressed in shoot apical meristem, leaf primordia vascular tissues and tapetum of anthers.

Functionally, may activate cell cycle in the root apical meristem (RAM) and promote embryonic root (radicle) protrusion. This is Cyclin-D4-1 (CYCD4-1) from Arabidopsis thaliana (Mouse-ear cress).